The primary structure comprises 292 residues: Peroxisomal 2,4-dienoyl-CoA reductase SPS19 [(3E)-enoyl-CoA-producing] (292 aa).

Ile36, Asp85, and Lys145 together coordinate NADP(+). Residue Ser162 is the Proton donor of the active site. Lys180 lines the NADP(+) pocket. Lys180 functions as the Lowers pKa of active site Tyr in the catalytic mechanism. Lys188 is covalently cross-linked (Glycyl lysine isopeptide (Lys-Gly) (interchain with G-Cter in ubiquitin)). Ile209 contacts NADP(+). The short motif at 290–292 (SKL) is the Microbody targeting signal element.

This sequence belongs to the short-chain dehydrogenases/reductases (SDR) family. In terms of assembly, homodimer.

The protein resides in the peroxisome. It carries out the reaction a (2E,4Z)-dienoyl-CoA + NADPH + H(+) = a 4,5-saturated-(3E)-enoyl-CoA + NADP(+). The enzyme catalyses a (2E,4E)-dienoyl-CoA + NADPH + H(+) = a 4,5-saturated-(3E)-enoyl-CoA + NADP(+). Functionally, auxiliary enzyme of beta-oxidation. Participates in the degradation of unsaturated fatty enoyl-CoA esters having double bonds in both even- and odd-numbered positions in peroxisome. Catalyzes the NADP-dependent reduction of 2,4-dienoyl-CoA to yield trans-3-enoyl-CoA. Dispensable for growth and sporulation on solid acetate and oleate media, but is essential for these processes to occur on petroselineate. The protein is Peroxisomal 2,4-dienoyl-CoA reductase SPS19 [(3E)-enoyl-CoA-producing] (SPS19) of Saccharomyces cerevisiae (strain ATCC 204508 / S288c) (Baker's yeast).